The following is a 39-amino-acid chain: Photosystem II reaction center protein X (39 aa).

A helical transmembrane segment spans residues 10-30 (WSLVLGAAIVLIPATIGLIFI).

The protein belongs to the PsbX family. Type 1 subfamily. In terms of assembly, PSII is composed of 1 copy each of membrane proteins PsbA, PsbB, PsbC, PsbD, PsbE, PsbF, PsbH, PsbI, PsbJ, PsbK, PsbL, PsbM, PsbT, PsbX, PsbY, PsbZ, Psb30/Ycf12, peripheral proteins PsbO, CyanoQ (PsbQ), PsbU, PsbV and a large number of cofactors. It forms dimeric complexes.

It localises to the cellular thylakoid membrane. Involved in the binding and/or turnover of quinones at the Q(B) site of photosystem II (PSII). PSII is a light-driven water plastoquinone oxidoreductase, using light energy to abstract electrons from H(2)O, generating a proton gradient subsequently used for ATP formation. The sequence is that of Photosystem II reaction center protein X from Microcystis aeruginosa (strain NIES-843 / IAM M-2473).